A 310-amino-acid chain; its full sequence is Delta(1)-pyrroline-2-carboxylate reductase 1 (310 aa).

Belongs to the ornithine cyclodeaminase/mu-crystallin family.

It catalyses the reaction L-proline + NAD(+) = 1-pyrroline-2-carboxylate + NADH + H(+). The enzyme catalyses L-proline + NADP(+) = 1-pyrroline-2-carboxylate + NADPH + H(+). Functionally, catalyzes the reduction of Delta(1)-pyrroline-2-carboxylate (Pyr2C) to L-proline, using NADPH as the electron donor. May be involved in a degradation pathway that converts trans-3-hydroxy-L-proline (t3LHyp) to L-proline. This is Delta(1)-pyrroline-2-carboxylate reductase 1 from Burkholderia multivorans (strain ATCC 17616 / 249).